Consider the following 157-residue polypeptide: S-ribosylhomocysteine lyase (157 aa).

Positions 54, 58, and 126 each coordinate Fe cation.

Belongs to the LuxS family. Homodimer. Fe cation is required as a cofactor.

The catalysed reaction is S-(5-deoxy-D-ribos-5-yl)-L-homocysteine = (S)-4,5-dihydroxypentane-2,3-dione + L-homocysteine. In terms of biological role, involved in the synthesis of autoinducer 2 (AI-2) which is secreted by bacteria and is used to communicate both the cell density and the metabolic potential of the environment. The regulation of gene expression in response to changes in cell density is called quorum sensing. Catalyzes the transformation of S-ribosylhomocysteine (RHC) to homocysteine (HC) and 4,5-dihydroxy-2,3-pentadione (DPD). The protein is S-ribosylhomocysteine lyase of Bacillus cereus (strain 03BB102).